The primary structure comprises 202 residues: FMN-dependent NADH:quinone oxidoreductase 1 (202 aa).

Residues Ser-9, 15 to 17 (SAS), 95 to 98 (MYNF), and 139 to 142 (TSGG) each bind FMN.

The protein belongs to the azoreductase type 1 family. In terms of assembly, homodimer. FMN is required as a cofactor.

It catalyses the reaction 2 a quinone + NADH + H(+) = 2 a 1,4-benzosemiquinone + NAD(+). It carries out the reaction N,N-dimethyl-1,4-phenylenediamine + anthranilate + 2 NAD(+) = 2-(4-dimethylaminophenyl)diazenylbenzoate + 2 NADH + 2 H(+). In terms of biological role, quinone reductase that provides resistance to thiol-specific stress caused by electrophilic quinones. Its function is as follows. Also exhibits azoreductase activity. Catalyzes the reductive cleavage of the azo bond in aromatic azo compounds to the corresponding amines. This Pseudomonas syringae pv. tomato (strain ATCC BAA-871 / DC3000) protein is FMN-dependent NADH:quinone oxidoreductase 1.